A 160-amino-acid polypeptide reads, in one-letter code: Aspartate 1-decarboxylase 2 (160 aa).

The active-site Schiff-base intermediate with substrate; via pyruvic acid is the serine 25. Residue serine 25 is modified to Pyruvic acid (Ser). Residue threonine 57 participates in substrate binding. Residue tyrosine 58 is the Proton donor of the active site. 73–75 (GAA) contacts substrate.

It belongs to the PanD family. In terms of assembly, heterooctamer of four alpha and four beta subunits. Pyruvate is required as a cofactor. In terms of processing, is synthesized initially as an inactive proenzyme, which is activated by self-cleavage at a specific serine bond to produce a beta-subunit with a hydroxyl group at its C-terminus and an alpha-subunit with a pyruvoyl group at its N-terminus.

It is found in the cytoplasm. The enzyme catalyses L-aspartate + H(+) = beta-alanine + CO2. The protein operates within cofactor biosynthesis; (R)-pantothenate biosynthesis; beta-alanine from L-aspartate: step 1/1. Functionally, catalyzes the pyruvoyl-dependent decarboxylation of aspartate to produce beta-alanine. In Frankia casuarinae (strain DSM 45818 / CECT 9043 / HFP020203 / CcI3), this protein is Aspartate 1-decarboxylase 2.